A 186-amino-acid chain; its full sequence is Peptidyl-tRNA hydrolase (186 aa).

Residue Tyr-14 participates in tRNA binding. His-19 serves as the catalytic Proton acceptor. 3 residues coordinate tRNA: Tyr-64, Asn-66, and Asn-112.

Belongs to the PTH family. As to quaternary structure, monomer.

It localises to the cytoplasm. It catalyses the reaction an N-acyl-L-alpha-aminoacyl-tRNA + H2O = an N-acyl-L-amino acid + a tRNA + H(+). Functionally, hydrolyzes ribosome-free peptidyl-tRNAs (with 1 or more amino acids incorporated), which drop off the ribosome during protein synthesis, or as a result of ribosome stalling. Catalyzes the release of premature peptidyl moieties from peptidyl-tRNA molecules trapped in stalled 50S ribosomal subunits, and thus maintains levels of free tRNAs and 50S ribosomes. The protein is Peptidyl-tRNA hydrolase of Bacillus anthracis.